A 780-amino-acid chain; its full sequence is Replication origin-binding protein (780 aa).

Residues 39–195 (SFENVRQPIK…AAFKPDTQIA (157 aa)) form the Helicase ATP-binding domain. 52–59 (AAMGSGKT) contacts ATP.

It belongs to the herpesviridae OriBP family.

In terms of biological role, probably involved in DNA replication. Binds the origin of replication (ori). The chain is Replication origin-binding protein (U73) from Human herpesvirus 6A (strain Uganda-1102) (HHV-6 variant A).